We begin with the raw amino-acid sequence, 319 residues long: ATP-dependent 6-phosphofructokinase (319 aa).

ATP is bound at residue Gly-11. 21–25 provides a ligand contact to ADP; that stretch reads RAVVR. Residues 72–73 and 102–105 contribute to the ATP site; these read RY and GDGS. Residue Asp-103 coordinates Mg(2+). 125-127 provides a ligand contact to substrate; the sequence is TID. Asp-127 functions as the Proton acceptor in the catalytic mechanism. Arg-154 lines the ADP pocket. Residues Arg-162 and 169–171 contribute to the substrate site; that span reads MGR. ADP contacts are provided by residues 185-187, Arg-211, and 213-215; these read GAE and KKH. Substrate contacts are provided by residues Glu-222, Arg-243, and 249–252; that span reads HVQR.

The protein belongs to the phosphofructokinase type A (PFKA) family. ATP-dependent PFK group I subfamily. Prokaryotic clade 'B1' sub-subfamily. In terms of assembly, homotetramer. Mg(2+) is required as a cofactor.

The protein resides in the cytoplasm. The enzyme catalyses beta-D-fructose 6-phosphate + ATP = beta-D-fructose 1,6-bisphosphate + ADP + H(+). Its pathway is carbohydrate degradation; glycolysis; D-glyceraldehyde 3-phosphate and glycerone phosphate from D-glucose: step 3/4. With respect to regulation, allosterically activated by ADP and other diphosphonucleosides, and allosterically inhibited by phosphoenolpyruvate. Functionally, catalyzes the phosphorylation of D-fructose 6-phosphate to fructose 1,6-bisphosphate by ATP, the first committing step of glycolysis. In Listeria welshimeri serovar 6b (strain ATCC 35897 / DSM 20650 / CCUG 15529 / CIP 8149 / NCTC 11857 / SLCC 5334 / V8), this protein is ATP-dependent 6-phosphofructokinase.